The sequence spans 224 residues: 7-cyano-7-deazaguanine synthase (224 aa).

9–19 is a binding site for ATP; that stretch reads LSGGLDSATVL. Zn(2+) contacts are provided by C189, C199, C202, and C205.

Belongs to the QueC family. Zn(2+) serves as cofactor.

The catalysed reaction is 7-carboxy-7-deazaguanine + NH4(+) + ATP = 7-cyano-7-deazaguanine + ADP + phosphate + H2O + H(+). Its pathway is purine metabolism; 7-cyano-7-deazaguanine biosynthesis. Catalyzes the ATP-dependent conversion of 7-carboxy-7-deazaguanine (CDG) to 7-cyano-7-deazaguanine (preQ(0)). This is 7-cyano-7-deazaguanine synthase from Ralstonia nicotianae (strain ATCC BAA-1114 / GMI1000) (Ralstonia solanacearum).